We begin with the raw amino-acid sequence, 313 residues long: Olfactory receptor 5H15 (313 aa).

Residues 1–28 (MEEENATLLTEFVLTGFLYQPQWKIPLF) are Extracellular-facing. N5 is a glycosylation site (N-linked (GlcNAc...) asparagine). The chain crosses the membrane as a helical span at residues 29–49 (LAFLVIYLITIMGNLGLIAVI). Topologically, residues 50–56 (WKDPHLH) are cytoplasmic. Residues 57–77 (IPMYLLLGNLAFVDAWISSTV) traverse the membrane as a helical segment. Topologically, residues 78-98 (TPKMLNNFLAKSKMISLSECK) are extracellular. C97 and C179 are joined by a disulfide. A helical transmembrane segment spans residues 99–119 (IQFFSIAIGVTTECFLLATMA). The Cytoplasmic segment spans residues 120–143 (YDRYVAICKPLLYPAIMTNGLCIR). The chain crosses the membrane as a helical span at residues 144–164 (LLILSYIAGILHALIHEGFLF). Residues 165–195 (RLTFCNSNIVHHIYCDTIPLSKISCTDSSIN) are Extracellular-facing. A helical membrane pass occupies residues 196-216 (FLMVFIFSGSIQVFSIVTILI). Topologically, residues 217 to 240 (SYTFVLFTVLEKKSDKGVRKAFST) are cytoplasmic. Residues 241–261 (CGAHLFSVCLYYGPLLLMYVG) form a helical membrane-spanning segment. The Extracellular portion of the chain corresponds to 262 to 271 (PASPQADGQN). Residues 272 to 292 (MVEPLFYTVIIPLLNPIIYSL) form a helical membrane-spanning segment. At 293–313 (RNKQVIVSFIKMLKRNVKVSY) the chain is on the cytoplasmic side.

This sequence belongs to the G-protein coupled receptor 1 family.

It localises to the cell membrane. Functionally, odorant receptor. The sequence is that of Olfactory receptor 5H15 (OR5H15) from Homo sapiens (Human).